The primary structure comprises 465 residues: Serine carboxypeptidase-like 46 (465 aa).

An N-terminal signal peptide occupies residues 1-25 (MPRLQCLTMATSLILLLQALSLVSS). Cystine bridges form between cysteine 88/cysteine 344, cysteine 245/cysteine 263, and cysteine 288/cysteine 313. Asparagine 137 and asparagine 170 each carry an N-linked (GlcNAc...) asparagine glycan. Residue serine 179 is part of the active site. Residue asparagine 246 is glycosylated (N-linked (GlcNAc...) asparagine). Residues aspartate 381 and histidine 438 contribute to the active site.

This sequence belongs to the peptidase S10 family. In terms of tissue distribution, ubiquitous.

It is found in the secreted. Its function is as follows. Probable carboxypeptidase. The chain is Serine carboxypeptidase-like 46 (SCPL46) from Arabidopsis thaliana (Mouse-ear cress).